The primary structure comprises 423 residues: CinA-like protein (423 aa).

This sequence belongs to the CinA family.

This chain is CinA-like protein, found in Synechococcus sp. (strain CC9311).